The chain runs to 54 residues: Large ribosomal subunit protein bL33 (54 aa).

This sequence belongs to the bacterial ribosomal protein bL33 family.

This chain is Large ribosomal subunit protein bL33, found in Opitutus terrae (strain DSM 11246 / JCM 15787 / PB90-1).